The sequence spans 252 residues: Ribosome assembly factor mrt4 (252 aa).

The protein belongs to the universal ribosomal protein uL10 family. In terms of assembly, associates with the pre-60S ribosomal particle.

Its subcellular location is the nucleus. It is found in the nucleolus. It localises to the cytoplasm. Component of the ribosome assembly machinery. Nuclear paralog of the ribosomal protein P0, it binds pre-60S subunits at an early stage of assembly in the nucleolus, and is replaced by P0 in cytoplasmic pre-60S subunits and mature 80S ribosomes. The chain is Ribosome assembly factor mrt4 from Neurospora crassa (strain ATCC 24698 / 74-OR23-1A / CBS 708.71 / DSM 1257 / FGSC 987).